A 619-amino-acid polypeptide reads, in one-letter code: UvrABC system protein C (619 aa).

The 79-residue stretch at 20–98 folds into the GIY-YIG domain; the sequence is TAPGVYRMYA…IKSLSPRYNV (79 aa). Positions 207 to 242 constitute a UVR domain; sequence DQLGEEIMHSMQQASEALEFERAARLRDLLSSLRSM.

It belongs to the UvrC family. Interacts with UvrB in an incision complex.

Its subcellular location is the cytoplasm. In terms of biological role, the UvrABC repair system catalyzes the recognition and processing of DNA lesions. UvrC both incises the 5' and 3' sides of the lesion. The N-terminal half is responsible for the 3' incision and the C-terminal half is responsible for the 5' incision. The protein is UvrABC system protein C of Xanthomonas axonopodis pv. citri (strain 306).